The following is a 249-amino-acid chain: Tetrahydromethanopterin S-methyltransferase subunit A (249 aa).

The Cytoplasmic segment spans residues 1–227 (MADKKEVIQN…KISSGYYAGK (227 aa)). A 5-hydroxybenzimidazolylcob(I)amide-binding site is contributed by His-84. A helical transmembrane segment spans residues 228–248 (IEGIVIGFILTLVFLIIIIQG). A topological domain (extracellular) is located at residue Leu-249.

This sequence belongs to the MtrA family. As to quaternary structure, the complex is composed of 8 subunits; MtrA, MtrB, MtrC, MtrD, MtrE, MtrF, MtrG and MtrH. Requires 5-hydroxybenzimidazolylcob(I)amide as cofactor.

Its subcellular location is the cell membrane. The enzyme catalyses 5-methyl-5,6,7,8-tetrahydromethanopterin + coenzyme M + 2 Na(+)(in) = 5,6,7,8-tetrahydromethanopterin + methyl-coenzyme M + 2 Na(+)(out). The protein operates within one-carbon metabolism; methanogenesis from CO(2); methyl-coenzyme M from 5,10-methylene-5,6,7,8-tetrahydromethanopterin: step 2/2. In terms of biological role, part of a complex that catalyzes the formation of methyl-coenzyme M and tetrahydromethanopterin from coenzyme M and methyl-tetrahydromethanopterin. This is an energy-conserving, sodium-ion translocating step. This chain is Tetrahydromethanopterin S-methyltransferase subunit A, found in Methanosphaera stadtmanae (strain ATCC 43021 / DSM 3091 / JCM 11832 / MCB-3).